The primary structure comprises 1093 residues: Protein translocase subunit SecA (1093 aa).

ATP-binding positions include Gln84, 102-106, and Asp491; that span reads GEGKT. Disordered regions lie at residues 837-869 and 904-1062; these read QNLQ…SEHE and SELE…TSEA. Composition is skewed to basic and acidic residues over residues 904–937, 944–971, and 978–1062; these read SELE…DATK, EELK…EKLK, and PKDL…TSEA.

This sequence belongs to the SecA family. As to quaternary structure, monomer and homodimer. Part of the essential Sec protein translocation apparatus which comprises SecA, SecYEG and auxiliary proteins SecDF. Other proteins may also be involved.

The protein resides in the cell membrane. The protein localises to the cytoplasm. The catalysed reaction is ATP + H2O + cellular proteinSide 1 = ADP + phosphate + cellular proteinSide 2.. In terms of biological role, part of the Sec protein translocase complex. Interacts with the SecYEG preprotein conducting channel. Has a central role in coupling the hydrolysis of ATP to the transfer of proteins into and across the cell membrane, serving as an ATP-driven molecular motor driving the stepwise translocation of polypeptide chains across the membrane. In Mycoplasmopsis synoviae (strain 53) (Mycoplasma synoviae), this protein is Protein translocase subunit SecA.